A 432-amino-acid chain; its full sequence is Keratin, type I cytoskeletal 18-B (432 aa).

A compositionally biased stretch (low complexity) spans 1-21; that stretch reads MSYSRSMYSSSSVVGGSPYRS. Positions 1–44 are disordered; sequence MSYSRSMYSSSSVVGGSPYRSLSSAPRFAPGSSAASVHAGPGGS. The segment at 2–82 is head; it reads SYSRSMYSSS…NVSLMGGAQN (81 aa). Positions 83-118 are coil 1A; that stretch reads EKETMQDLNDRLASYLERVRSLETANKELEVQIRQH. The 311-residue stretch at 83 to 393 folds into the IF rod domain; it reads EKETMQDLND…RLLEGDSFDL (311 aa). A linker 1 region spans residues 119–134; it reads TEKKGPAKDWSPYYKA. Residues 135–226 are coil 1B; the sequence is IEDLKKQVFD…KNHQDDVNEL (92 aa). A linker 12 region spans residues 227–250; the sequence is QAQIARSAVTVEVDAPKSQDLGKI. The coil 2 stretch occupies residues 251–388; sequence MAELRAQYDG…IHTYRRLLEG (138 aa). The interval 389–432 is tail; that stretch reads DSFDLQDAVPTVTTQTVKKVITTTQRIVDGKVVAESNDTEVLKA.

This sequence belongs to the intermediate filament family. In terms of assembly, heterotetramer of two type I and two type II keratins. Keratin-18 associates with keratin-8. Phosphorylated. In terms of processing, proteolytically cleaved by caspases during epithelial cell apoptosis.

When phosphorylated, plays a role in filament reorganization. The protein is Keratin, type I cytoskeletal 18-B (krt18-b) of Xenopus laevis (African clawed frog).